The chain runs to 406 residues: Tryptophan 2,3-dioxygenase (406 aa).

Residues 72–76 and Arg-144 contribute to the substrate site; that span reads FIITH. Position 328 (His-328) interacts with heme. A substrate-binding site is contributed by Thr-342.

The protein belongs to the tryptophan 2,3-dioxygenase family. As to quaternary structure, homotetramer. Dimer of dimers. Heme is required as a cofactor.

The catalysed reaction is L-tryptophan + O2 = N-formyl-L-kynurenine. It participates in amino-acid degradation; L-tryptophan degradation via kynurenine pathway; L-kynurenine from L-tryptophan: step 1/2. In terms of biological role, heme-dependent dioxygenase that catalyzes the oxidative cleavage of the L-tryptophan (L-Trp) pyrrole ring and converts L-tryptophan to N-formyl-L-kynurenine. Catalyzes the oxidative cleavage of the indole moiety. The polypeptide is Tryptophan 2,3-dioxygenase (Homo sapiens (Human)).